Reading from the N-terminus, the 582-residue chain is Trans-activating transcriptional regulatory protein (582 aa).

The interval 101–131 is disordered; it reads QPVVEQPSPSSAYHAESFEHSAGVNQPSATG.

It belongs to the nucleopolyhedrovirus IE-1 protein family. As to quaternary structure, homodimer. Interacts with helicase and LEF-3. Phosphorylated.

The protein localises to the host nucleus. Functionally, regulatory transcriptional protein, which trans-activates gene expression from early baculovirus promoters. Can also trans-activate its own promoter, suggesting an autoregulation during infection of host cells. Also promotes viral DNA genome replication via the N-terminal region. The protein is Trans-activating transcriptional regulatory protein (IE1) of Autographa californica nuclear polyhedrosis virus (AcMNPV).